Consider the following 373-residue polypeptide: Unsaturated rhamnogalacturonyl hydrolase YteR (373 aa).

Residues 40–41 (HY), D88, and 132–136 (HKDGY) each bind substrate. D143 (proton donor) is an active-site residue. Substrate contacts are provided by residues 213–217 (RSIGW) and 333–334 (TS).

This sequence belongs to the glycosyl hydrolase 105 family. As to quaternary structure, monomer.

The protein localises to the cytoplasm. It catalyses the reaction 2-O-(4-deoxy-beta-L-threo-hex-4-enopyranuronosyl)-alpha-L-rhamnose + H2O = 5-dehydro-4-deoxy-D-glucuronate + L-rhamnopyranose. Functionally, catalyzes the hydrolysis of unsaturated rhamnogalacturonan disaccharide to yield unsaturated D-galacturonic acid and L-rhamnose. It cannot act on unsaturated glucuronyl hydrolase (UGL) substrates containing unsaturated D-glucuronic acid at the non-reducing terminus, although the active pockets of YesR and UGL are very similar. This chain is Unsaturated rhamnogalacturonyl hydrolase YteR (yteR), found in Bacillus subtilis (strain 168).